Consider the following 202-residue polypeptide: Na(+)-translocating NADH-quinone reductase subunit E (202 aa).

6 helical membrane-spanning segments follow: residues 11-31 (SVFI…FIAI), 35-55 (VETA…TVPA), 81-101 (FLGF…LEML), 114-134 (GIYL…LFMV), 144-164 (VVYG…LAGI), and 180-200 (LGIA…FSGI).

Belongs to the NqrDE/RnfAE family. In terms of assembly, composed of six subunits; NqrA, NqrB, NqrC, NqrD, NqrE and NqrF.

It is found in the cell inner membrane. The catalysed reaction is a ubiquinone + n Na(+)(in) + NADH + H(+) = a ubiquinol + n Na(+)(out) + NAD(+). In terms of biological role, NQR complex catalyzes the reduction of ubiquinone-1 to ubiquinol by two successive reactions, coupled with the transport of Na(+) ions from the cytoplasm to the periplasm. NqrA to NqrE are probably involved in the second step, the conversion of ubisemiquinone to ubiquinol. The polypeptide is Na(+)-translocating NADH-quinone reductase subunit E (Azotobacter vinelandii (strain DJ / ATCC BAA-1303)).